The primary structure comprises 243 residues: Orotidine 5'-phosphate decarboxylase (243 aa).

Residues aspartate 16, lysine 38, 65-74, threonine 120, arginine 181, glutamine 190, glycine 210, and arginine 211 each bind substrate; that span reads DLKLHDIPNT. Catalysis depends on lysine 67, which acts as the Proton donor.

The protein belongs to the OMP decarboxylase family. Type 1 subfamily. Homodimer.

The enzyme catalyses orotidine 5'-phosphate + H(+) = UMP + CO2. It functions in the pathway pyrimidine metabolism; UMP biosynthesis via de novo pathway; UMP from orotate: step 2/2. Its function is as follows. Catalyzes the decarboxylation of orotidine 5'-monophosphate (OMP) to uridine 5'-monophosphate (UMP). The protein is Orotidine 5'-phosphate decarboxylase of Bradyrhizobium sp. (strain BTAi1 / ATCC BAA-1182).